A 593-amino-acid chain; its full sequence is Calnexin (593 aa).

The signal sequence occupies residues 1-20; sequence MEGKWLLCMLLVLGTTIVQA. The Lumenal segment spans residues 21 to 482; that stretch reads HEGHDDDMID…QMIEAAEERP (462 aa). Residues Ser-75 and Asp-118 each coordinate Ca(2+). Lys-138 is modified (N6-acetyllysine). Cys-161 and Cys-195 are joined by a disulfide. An alpha-D-glucoside contacts are provided by Tyr-165, Lys-167, Tyr-186, and Asp-193. The disordered stretch occupies residues 261 to 346; sequence GNLLNDMTPP…AEKPEDWDED (86 aa). Positions 277–410 are p domain (Extended arm); that stretch reads IEDPEDQKPE…RKIPNPDFFE (134 aa). 5 tandem repeats follow at residues 279 to 290, 296 to 307, 315 to 326, 334 to 345, and 349 to 359. 2 4 X approximate repeats regions span residues 279-345 and 349-406; these read DPED…DWDE and GEWE…IPNP. Over residues 282–320 the composition is skewed to basic and acidic residues; it reads DQKPEDWDERPKIPDPDAVKPDDWNEDAPAKIPDEEATK. A compositionally biased stretch (acidic residues) spans 324–346; it reads WLDDEPEYVPDPDAEKPEDWDED. Residues 327–360 are interaction with PPIB; it reads DEPEYVPDPDAEKPEDWDEDMDGEWEAPQIANPK. A disulfide bridge links Cys-361 with Cys-367. 3 tandem repeats follow at residues 368 to 378, 382 to 392, and 396 to 406. Glu-426 is an an alpha-D-glucoside binding site. Asp-437 contacts Ca(2+). A helical transmembrane segment spans residues 483–503; that stretch reads WLWVVYVLTVALPVFLVILFC. 2 S-palmitoyl cysteine lipidation sites follow: Cys-503 and Cys-504. Residues 504 to 593 are Cytoplasmic-facing; sequence CSGKKQSSPV…SPRNRKPRRE (90 aa). Residues 504 to 593 are sufficient to mediate interaction with SGIP1; that stretch reads CSGKKQSSPV…SPRNRKPRRE (90 aa). The segment at 511–593 is disordered; it reads SPVEYKKTDA…SPRNRKPRRE (83 aa). A compositionally biased stretch (acidic residues) spans 526-548; that stretch reads KEEEEEKEEEKDKGDEEEEGEEK. A Phosphoserine modification is found at Ser-555. Residue Thr-563 is modified to Phosphothreonine. Ser-565 bears the Phosphoserine; by MAPK3 mark. Ser-584 carries the phosphoserine modification.

This sequence belongs to the calreticulin family. As to quaternary structure, interacts with MAPK3/ERK1. Interacts with KCNH2. Associates with ribosomes. Interacts with SGIP1; involved in negative regulation of endocytosis. The palmitoylated form interacts with the ribosome-translocon complex component SSR1, promoting efficient folding of glycoproteins. Interacts with SERPINA2P/SERPINA2 and with the S and Z variants of SERPINA1. Interacts with PPIB. Interacts with ZNRF4. Interacts with SMIM22. Interacts with TMX2. Interacts with TMEM35A/NACHO and CHRNA7. Interacts with reticulophagy regulators RETREG2 and RETREG3. Interacts with DNM1L; may form part of a larger protein complex at the ER-mitochondrial interface during mitochondrial fission. Interacts with ADAM7. Phosphorylated at Ser-565 by MAPK3/ERK1. Phosphorylation by MAPK3/ERK1 increases its association with ribosomes. Post-translationally, palmitoylation by DHHC6 leads to the preferential localization to the perinuclear rough ER. It mediates the association of calnexin with the ribosome-translocon complex (RTC) which is required for efficient folding of glycosylated proteins. In terms of processing, ubiquitinated, leading to proteasomal degradation. Probably ubiquitinated by ZNRF4.

Its subcellular location is the endoplasmic reticulum membrane. The protein localises to the mitochondrion membrane. It localises to the melanosome membrane. Functionally, calcium-binding protein that interacts with newly synthesized monoglucosylated glycoproteins in the endoplasmic reticulum. It may act in assisting protein assembly and/or in the retention within the ER of unassembled protein subunits. It seems to play a major role in the quality control apparatus of the ER by the retention of incorrectly folded proteins. Associated with partial T-cell antigen receptor complexes that escape the ER of immature thymocytes, it may function as a signaling complex regulating thymocyte maturation. Additionally it may play a role in receptor-mediated endocytosis at the synapse. This Canis lupus familiaris (Dog) protein is Calnexin (CANX).